The following is a 333-amino-acid chain: Nucleoid-associated protein VC0395_A1624/VC395_2154 (333 aa).

This sequence belongs to the YejK family.

It localises to the cytoplasm. The protein resides in the nucleoid. In Vibrio cholerae serotype O1 (strain ATCC 39541 / Classical Ogawa 395 / O395), this protein is Nucleoid-associated protein VC0395_A1624/VC395_2154.